The sequence spans 157 residues: Ribosomal RNA large subunit methyltransferase H (157 aa).

S-adenosyl-L-methionine-binding positions include leucine 73, glycine 105, and 124–129 (MSKMTF).

This sequence belongs to the RNA methyltransferase RlmH family. In terms of assembly, homodimer.

It localises to the cytoplasm. The enzyme catalyses pseudouridine(1915) in 23S rRNA + S-adenosyl-L-methionine = N(3)-methylpseudouridine(1915) in 23S rRNA + S-adenosyl-L-homocysteine + H(+). Specifically methylates the pseudouridine at position 1915 (m3Psi1915) in 23S rRNA. This is Ribosomal RNA large subunit methyltransferase H from Bacteroides thetaiotaomicron (strain ATCC 29148 / DSM 2079 / JCM 5827 / CCUG 10774 / NCTC 10582 / VPI-5482 / E50).